We begin with the raw amino-acid sequence, 121 residues long: Large ribosomal subunit protein uL18 (121 aa).

It belongs to the universal ribosomal protein uL18 family. In terms of assembly, part of the 50S ribosomal subunit; part of the 5S rRNA/L5/L18/L25 subcomplex. Contacts the 5S and 23S rRNAs.

Its function is as follows. This is one of the proteins that bind and probably mediate the attachment of the 5S RNA into the large ribosomal subunit, where it forms part of the central protuberance. This chain is Large ribosomal subunit protein uL18, found in Geobacter metallireducens (strain ATCC 53774 / DSM 7210 / GS-15).